We begin with the raw amino-acid sequence, 760 residues long: Probable 3',5'-cyclic phosphodiesterase pde-6 (760 aa).

Disordered regions lie at residues 1-47 (MGDR…AATA) and 410-429 (KRSV…ERRR). Over residues 33-47 (PAARRGAQRAPAATA) the composition is skewed to low complexity. Residues 412 to 429 (SVVDAHREKRGSHGERRR) are compositionally biased toward basic and acidic residues. In terms of domain architecture, PDEase spans 426 to 750 (ERRRVSADVK…EKWKVMTSQW (325 aa)). Histidine 502 functions as the Proton donor in the catalytic mechanism. A divalent metal cation-binding residues include histidine 506, histidine 542, aspartate 543, and aspartate 656.

It belongs to the cyclic nucleotide phosphodiesterase family. Requires a divalent metal cation as cofactor.

The catalysed reaction is a nucleoside 3',5'-cyclic phosphate + H2O = a nucleoside 5'-phosphate + H(+). The chain is Probable 3',5'-cyclic phosphodiesterase pde-6 (pde-6) from Caenorhabditis elegans.